The sequence spans 352 residues: Quinolinate synthase (352 aa).

His48 and Ser69 together coordinate iminosuccinate. Cys114 is a binding site for [4Fe-4S] cluster. Residues 140 to 142 (YAN) and Ser157 each bind iminosuccinate. Cys201 serves as a coordination point for [4Fe-4S] cluster. Iminosuccinate is bound by residues 227-229 (HPE) and Thr244. Residue Cys298 participates in [4Fe-4S] cluster binding.

The protein belongs to the quinolinate synthase family. Type 1 subfamily. [4Fe-4S] cluster is required as a cofactor.

The protein localises to the cytoplasm. It catalyses the reaction iminosuccinate + dihydroxyacetone phosphate = quinolinate + phosphate + 2 H2O + H(+). It participates in cofactor biosynthesis; NAD(+) biosynthesis; quinolinate from iminoaspartate: step 1/1. Functionally, catalyzes the condensation of iminoaspartate with dihydroxyacetone phosphate to form quinolinate. This is Quinolinate synthase from Pseudomonas putida (strain GB-1).